The following is a 142-amino-acid chain: Hemoglobin subunit alpha (142 aa).

The region spanning V2–R142 is the Globin domain. S4 bears the Phosphoserine mark. Residues K8 and K12 each carry the N6-succinyllysine modification. K17 is modified (N6-acetyllysine; alternate). K17 is subject to N6-succinyllysine; alternate. Residue Y25 is modified to Phosphotyrosine. S36 carries the post-translational modification Phosphoserine. Residue K41 is modified to N6-succinyllysine. Position 50 is a phosphoserine (S50). An O2-binding site is contributed by H59. Residue H88 participates in heme b binding. Phosphoserine is present on S103. At T109 the chain carries Phosphothreonine. Residues S125 and S132 each carry the phosphoserine modification. T135 and T138 each carry phosphothreonine. The residue at position 139 (S139) is a Phosphoserine.

The protein belongs to the globin family. As to quaternary structure, heterotetramer of two alpha chains and two beta chains. In terms of tissue distribution, red blood cells.

In terms of biological role, involved in oxygen transport from the lung to the various peripheral tissues. Its function is as follows. Hemopressin acts as an antagonist peptide of the cannabinoid receptor CNR1. Hemopressin-binding efficiently blocks cannabinoid receptor CNR1 and subsequent signaling. This chain is Hemoglobin subunit alpha (HBA), found in Pantholops hodgsonii (Chiru).